We begin with the raw amino-acid sequence, 260 residues long: Glutamate racemase (260 aa).

Residues 14 to 15 (DS) and 46 to 47 (YG) contribute to the substrate site. The active-site Proton donor/acceptor is the cysteine 77. 78 to 79 (NT) contacts substrate. The active-site Proton donor/acceptor is the cysteine 188. 189 to 190 (TH) is a substrate binding site.

This sequence belongs to the aspartate/glutamate racemases family.

It catalyses the reaction L-glutamate = D-glutamate. It functions in the pathway cell wall biogenesis; peptidoglycan biosynthesis. Provides the (R)-glutamate required for cell wall biosynthesis. The chain is Glutamate racemase from Clostridium perfringens (strain 13 / Type A).